A 466-amino-acid polypeptide reads, in one-letter code: Zinc finger protein NUTCRACKER (466 aa).

Residues methionine 1 to threonine 23 show a composition bias toward polar residues. The disordered stretch occupies residues methionine 1–serine 29. Serine 56 bears the Phosphoserine mark. The C2H2-type 1 zinc-finger motif lies at phenylalanine 66–histidine 88. The residue at position 98 (threonine 98) is a Phosphothreonine; by KIN10. The C2H2-type 2 zinc finger occupies tyrosine 107–histidine 137. A Nuclear localization signal motif is present at residues cysteine 134–lysine 141. The C2H2-type 2; degenerate zinc-finger motif lies at tryptophan 142–glycine 165. Positions 144, 147, 160, 164, 171, and 173 each coordinate Zn(2+). Residues tyrosine 169 to alanine 192 form a CCHC-type 2; atypical zinc finger. 2 positions are modified to phosphoserine; by KIN10: serine 178 and serine 182. The interval arginine 179 to aspartate 191 is SHR-binding. Zn(2+) is bound by residues histidine 186 and cysteine 190.

Interacts with AKIN10. Inhibition of transcription factor activity by KIN10-mediated phosphorylation at Thr-98, Ser-178 and Ser-182 under sugar deprivation conditions, thus delaying flowering. As to expression, highly expressed in vegetative organs and at lower levels in flowers and siliques. Expressed predominantly in roots. In roots, present in cortex, endodermis, and pericycle layer.

It is found in the nucleus. In terms of biological role, transcription activator that binds to the DNA sequence 5'-CTTTTGTCC-3'. Regulates photoperiodic flowering by modulating sugar transport and metabolism. Regulates SUS1 and SUS4. Transcription factor that regulates tissue boundaries and asymmetric cell division. Contributes to the sequestration of 'SHORT-ROOT' to the nucleus. The chain is Zinc finger protein NUTCRACKER from Arabidopsis thaliana (Mouse-ear cress).